Consider the following 190-residue polypeptide: PBP1-interacting protein LSM12 (190 aa).

The 68-residue stretch at 2-69 (PVCNNDSQLI…IKEVTALRDN (68 aa)) folds into the Sm domain. In terms of domain architecture, AD spans 84 to 190 (PSMQAARDRS…ERVQKTLSKK (107 aa)).

It belongs to the LSM12 family. As to quaternary structure, forms a complex composed of at least MKT1, PBP1, XAC1 and LSM12. Forms a complex composed of at least MKT1L, PBP1, XAC1 and LSM12. Within the complex, interacts with PBP1; the interaction is direct.

In terms of biological role, involved in post-transcriptional regulation of gene expression. In Trypanosoma brucei brucei (strain 927/4 GUTat10.1), this protein is PBP1-interacting protein LSM12.